The sequence spans 242 residues: Transcriptional activator protein BjaR1 (242 aa).

Positions 173-238 (TPYPSTRLTP…HAVALAIRHK (66 aa)) constitute an HTH luxR-type domain. Positions 197–216 (AWEIGEILHITQRTAEEHLA) form a DNA-binding region, H-T-H motif.

This sequence belongs to the autoinducer-regulated transcriptional regulatory protein family.

Functionally, transcriptional activator that functions in response to the quorum-sensing autoinducer IV-HSL (isovaleryl-homoserine lactone). Activates BjaI expression. Is sensitive to IV-HSL at concentrations as low as 10 pM. This is Transcriptional activator protein BjaR1 (bjaR1) from Bradyrhizobium diazoefficiens (strain JCM 10833 / BCRC 13528 / IAM 13628 / NBRC 14792 / USDA 110).